Reading from the N-terminus, the 324-residue chain is tRNA U34 carboxymethyltransferase (324 aa).

Carboxy-S-adenosyl-L-methionine is bound by residues Lys-91, Trp-105, Lys-110, Gly-130, 152–154, 181–182, Met-196, Tyr-200, and Arg-315; these read DPS and IE.

The protein belongs to the class I-like SAM-binding methyltransferase superfamily. CmoB family. In terms of assembly, homotetramer.

The enzyme catalyses carboxy-S-adenosyl-L-methionine + 5-hydroxyuridine(34) in tRNA = 5-carboxymethoxyuridine(34) in tRNA + S-adenosyl-L-homocysteine + H(+). Its function is as follows. Catalyzes carboxymethyl transfer from carboxy-S-adenosyl-L-methionine (Cx-SAM) to 5-hydroxyuridine (ho5U) to form 5-carboxymethoxyuridine (cmo5U) at position 34 in tRNAs. This Photobacterium profundum (strain SS9) protein is tRNA U34 carboxymethyltransferase.